The following is a 573-amino-acid chain: MLRLPTVLRQMRPVSRALAPHLTRAYAKDVKFGADARALMLQGVDLLADAVAVTMGPKGRTVIIEQSWGSPKVTKDGVTVAKSIDLKDKYKNIGAKLVQDVANNTNEEAGDGTTTATVLARSIAKEGFEKISKGANPVEIRRGVMLAVDAVIAELKKQSKPVTTPEEIAQVATISANGDKDIGNIISDAMKKVGRKGVITVKDGKTLNDELEIIEGMKFDRGYISPYFINTSKGQKCEFQDAYVLLSEKKISSVQSIVPALEIANAHRKPLVIIAEDVDGEALSTLVLNRLKVGLQVVAVKAPGFGDNRKNQLKDMAIATGGAVFGEEGLNLNLEDVQAHDLGKVGEVIVTKDDAMLLKGKGDKAHIEKRIQEITEQLDITTSEYEKEKLNERLAKLSDGVAVLKVGGTSDVEVNEKKDRVTDALNATRAAVEEGIVLGGGCALLRCIPALDSLKPANEDQKIGIEIIKRALKIPAMTIAKNAGVEGSLIVEKILQSSSEVGYDAMLGDFVNMVEKGIIDPTKVVRTALLDAAGVASLLTTAEAVVTEIPKEEKDPGMGAMGGMGGGMGGGMF.

A mitochondrion-targeting transit peptide spans 1-26 (MLRLPTVLRQMRPVSRALAPHLTRAY). Lys-31 is subject to N6-succinyllysine. A phosphoserine mark is found at Ser-67 and Ser-70. Lys-75 lines the ATP pocket. Lys-75 carries the N6-acetyllysine modification. Position 82 is an N6-acetyllysine; alternate (Lys-82). Lys-82 is subject to N6-succinyllysine; alternate. The residue at position 87 (Lys-87) is an N6-acetyllysine. Phosphotyrosine is present on Tyr-90. At Lys-91 the chain carries N6-acetyllysine. 111–115 (DGTTT) lines the ATP pocket. An N6-acetyllysine; alternate modification is found at Lys-125. An N6-succinyllysine; alternate modification is found at Lys-125. At Lys-130 the chain carries N6-acetyllysine. Lys-133 carries the post-translational modification N6-acetyllysine; alternate. Lys-133 is subject to N6-succinyllysine; alternate. Lys-133 is subject to N6-malonyllysine; alternate. Lys-156 bears the N6-acetyllysine mark. N6-acetyllysine; alternate is present on residues Lys-191, Lys-202, Lys-205, Lys-218, and Lys-236. N6-succinyllysine; alternate occurs at positions 191, 202, 205, 218, and 236. An N6-acetyllysine modification is found at Lys-249. Lys-250 bears the N6-acetyllysine; alternate mark. At Lys-250 the chain carries N6-succinyllysine; alternate. An N6-acetyllysine mark is found at Lys-269 and Lys-292. Lys-301 is modified (N6-succinyllysine). An N6-acetyllysine modification is found at Lys-314. Lys-352 carries the post-translational modification N6-acetyllysine; alternate. Lys-352 carries the N6-succinyllysine; alternate modification. N6-acetyllysine occurs at positions 359 and 389. Lys-396 carries the post-translational modification N6-acetyllysine; alternate. N6-succinyllysine; alternate is present on Lys-396. Residue Ser-410 is modified to Phosphoserine. Gly-440 is an ATP binding site. Lys-455 carries the post-translational modification N6-acetyllysine; alternate. Lys-455 bears the N6-succinyllysine; alternate mark. Lys-469 carries the post-translational modification N6-acetyllysine. Lys-481 is subject to N6-acetyllysine; alternate. At Lys-481 the chain carries N6-succinyllysine; alternate. Position 488 is a phosphoserine (Ser-488). Asp-520 contacts ATP. Residue Lys-551 forms a Glycyl lysine isopeptide (Lys-Gly) (interchain with G-Cter in SUMO2) linkage.

Belongs to the chaperonin (HSP60) family. Homoheptamer arranged in a ring structure. The functional units of these chaperonins consist of heptameric rings of the large subunit Hsp60, which function as a back-to-back double ring. Interacts with 2 heptameric Hsp10 rings to form the symmetrical football complex. Interacts with HRAS. Interacts with ATAD3A. Interacts with ETFBKMT and EEF1AKMT3. Interacts with MFHAS1.

Its subcellular location is the mitochondrion matrix. The catalysed reaction is ATP + H2O + a folded polypeptide = ADP + phosphate + an unfolded polypeptide.. In terms of biological role, chaperonin implicated in mitochondrial protein import and macromolecular assembly. Together with Hsp10, facilitates the correct folding of imported proteins. May also prevent misfolding and promote the refolding and proper assembly of unfolded polypeptides generated under stress conditions in the mitochondrial matrix. The functional units of these chaperonins consist of heptameric rings of the large subunit Hsp60, which function as a back-to-back double ring. In a cyclic reaction, Hsp60 ring complexes bind one unfolded substrate protein per ring, followed by the binding of ATP and association with 2 heptameric rings of the co-chaperonin Hsp10. This leads to sequestration of the substrate protein in the inner cavity of Hsp60 where, for a certain period of time, it can fold undisturbed by other cell components. Synchronous hydrolysis of ATP in all Hsp60 subunits results in the dissociation of the chaperonin rings and the release of ADP and the folded substrate protein. The sequence is that of 60 kDa heat shock protein, mitochondrial (Hspd1) from Rattus norvegicus (Rat).